Reading from the N-terminus, the 302-residue chain is Ribosomal RNA small subunit methyltransferase H (302 aa).

S-adenosyl-L-methionine contacts are provided by residues 43–45 (GGH), Asp62, Phe89, Asp105, and His112. The interval 276–302 (EIANNPRSRSAKLRIAEKQAETGDEDN) is disordered.

This sequence belongs to the methyltransferase superfamily. RsmH family.

It is found in the cytoplasm. The catalysed reaction is cytidine(1402) in 16S rRNA + S-adenosyl-L-methionine = N(4)-methylcytidine(1402) in 16S rRNA + S-adenosyl-L-homocysteine + H(+). Its function is as follows. Specifically methylates the N4 position of cytidine in position 1402 (C1402) of 16S rRNA. The chain is Ribosomal RNA small subunit methyltransferase H from Nostoc sp. (strain PCC 7120 / SAG 25.82 / UTEX 2576).